Here is a 459-residue protein sequence, read N- to C-terminus: UDP-N-acetylglucosamine 1-carboxyvinyltransferase (459 aa).

A phosphoenolpyruvate-binding site is contributed by 40–41; it reads KN. Arginine 111 contributes to the UDP-N-acetyl-alpha-D-glucosamine binding site. Cysteine 135 serves as the catalytic Proton donor. 2-(S-cysteinyl)pyruvic acid O-phosphothioketal is present on cysteine 135. UDP-N-acetyl-alpha-D-glucosamine-binding positions include 140–144, aspartate 324, and valine 346; that span reads RPVDL. The disordered stretch occupies residues 437–459; that stretch reads PSAPPSEVSSAVAAGPDAAAAPV. The span at 441 to 459 shows a compositional bias: low complexity; the sequence is PSEVSSAVAAGPDAAAAPV.

Belongs to the EPSP synthase family. MurA subfamily.

It localises to the cytoplasm. It catalyses the reaction phosphoenolpyruvate + UDP-N-acetyl-alpha-D-glucosamine = UDP-N-acetyl-3-O-(1-carboxyvinyl)-alpha-D-glucosamine + phosphate. The protein operates within cell wall biogenesis; peptidoglycan biosynthesis. In terms of biological role, cell wall formation. Adds enolpyruvyl to UDP-N-acetylglucosamine. In Gloeobacter violaceus (strain ATCC 29082 / PCC 7421), this protein is UDP-N-acetylglucosamine 1-carboxyvinyltransferase.